The primary structure comprises 334 residues: MIEADRLIQPQLQVQDDVVDRAMRPKLLDEYTGQDDTRAQLKVFIQAAKNRNEALDHMLIYGPPGLGKTTLAMIVANEMGVNIKSTSGPVLEKAGDLAALLTNLESGDVLFIDEIHRLSPVVEEILYPAMEDYQLDIMIGEGPAARSIKLDLPPFTLVGATTRAGALTSPLRARFGIPLRLEFYNIKDLSTIVTRSAQVMGLEIDTEGAFEIARRSRGTPRIANRLLRRVRDYAEVKHDGAITQFVADHALDLLDVDNEGFDYMDRKLMLAIIDKFMGGPVGLDNLAAAIGEERETIEDVLEPFLIQQGFIQRTPRGRIATARAYQHFQLIKPE.

A large ATPase domain (RuvB-L) region spans residues 4–184 (ADRLIQPQLQ…FGIPLRLEFY (181 aa)). ATP contacts are provided by residues Arg24, Gly65, Lys68, Thr69, Thr70, 131–133 (EDY), Arg174, Tyr184, and Arg221. Thr69 is a Mg(2+) binding site. Residues 185 to 255 (NIKDLSTIVT…VADHALDLLD (71 aa)) form a small ATPAse domain (RuvB-S) region. The segment at 258–334 (NEGFDYMDRK…YQHFQLIKPE (77 aa)) is head domain (RuvB-H). Residues Arg294, Arg313, and Arg318 each contribute to the DNA site.

This sequence belongs to the RuvB family. Homohexamer. Forms an RuvA(8)-RuvB(12)-Holliday junction (HJ) complex. HJ DNA is sandwiched between 2 RuvA tetramers; dsDNA enters through RuvA and exits via RuvB. An RuvB hexamer assembles on each DNA strand where it exits the tetramer. Each RuvB hexamer is contacted by two RuvA subunits (via domain III) on 2 adjacent RuvB subunits; this complex drives branch migration. In the full resolvosome a probable DNA-RuvA(4)-RuvB(12)-RuvC(2) complex forms which resolves the HJ.

It is found in the cytoplasm. The enzyme catalyses ATP + H2O = ADP + phosphate + H(+). Functionally, the RuvA-RuvB-RuvC complex processes Holliday junction (HJ) DNA during genetic recombination and DNA repair, while the RuvA-RuvB complex plays an important role in the rescue of blocked DNA replication forks via replication fork reversal (RFR). RuvA specifically binds to HJ cruciform DNA, conferring on it an open structure. The RuvB hexamer acts as an ATP-dependent pump, pulling dsDNA into and through the RuvAB complex. RuvB forms 2 homohexamers on either side of HJ DNA bound by 1 or 2 RuvA tetramers; 4 subunits per hexamer contact DNA at a time. Coordinated motions by a converter formed by DNA-disengaged RuvB subunits stimulates ATP hydrolysis and nucleotide exchange. Immobilization of the converter enables RuvB to convert the ATP-contained energy into a lever motion, pulling 2 nucleotides of DNA out of the RuvA tetramer per ATP hydrolyzed, thus driving DNA branch migration. The RuvB motors rotate together with the DNA substrate, which together with the progressing nucleotide cycle form the mechanistic basis for DNA recombination by continuous HJ branch migration. Branch migration allows RuvC to scan DNA until it finds its consensus sequence, where it cleaves and resolves cruciform DNA. This Shewanella sp. (strain W3-18-1) protein is Holliday junction branch migration complex subunit RuvB.